The sequence spans 343 residues: Heat-inducible transcription repressor HrcA (343 aa).

The protein belongs to the HrcA family.

Functionally, negative regulator of class I heat shock genes (grpE-dnaK-dnaJ and groELS operons). Prevents heat-shock induction of these operons. This chain is Heat-inducible transcription repressor HrcA, found in Mycobacterium ulcerans (strain Agy99).